We begin with the raw amino-acid sequence, 762 residues long: 5-methyltetrahydropteroyltriglutamate--homocysteine methyltransferase (762 aa).

Residues 17–20 (REWK) and Lys-111 each bind 5-methyltetrahydropteroyltri-L-glutamate. Residues 435 to 437 (IGS) and Glu-488 each bind L-homocysteine. L-methionine-binding positions include 435–437 (IGS) and Glu-488. 5-methyltetrahydropteroyltri-L-glutamate is bound by residues 519-520 (RC) and Trp-565. Asp-603 lines the L-homocysteine pocket. An L-methionine-binding site is contributed by Asp-603. Glu-609 contacts 5-methyltetrahydropteroyltri-L-glutamate. Zn(2+) is bound by residues His-645, Cys-647, and Glu-669. His-698 serves as the catalytic Proton donor. A Zn(2+)-binding site is contributed by Cys-730.

It belongs to the vitamin-B12 independent methionine synthase family. Zn(2+) is required as a cofactor.

The enzyme catalyses 5-methyltetrahydropteroyltri-L-glutamate + L-homocysteine = tetrahydropteroyltri-L-glutamate + L-methionine. The protein operates within amino-acid biosynthesis; L-methionine biosynthesis via de novo pathway; L-methionine from L-homocysteine (MetE route): step 1/1. In terms of biological role, catalyzes the transfer of a methyl group from 5-methyltetrahydrofolate to homocysteine resulting in methionine formation. In Bacillus thuringiensis subsp. konkukian (strain 97-27), this protein is 5-methyltetrahydropteroyltriglutamate--homocysteine methyltransferase.